A 92-amino-acid chain; its full sequence is Putative regulatory protein CTN_0877 (92 aa).

The protein belongs to the RemA family.

This is Putative regulatory protein CTN_0877 from Thermotoga neapolitana (strain ATCC 49049 / DSM 4359 / NBRC 107923 / NS-E).